Reading from the N-terminus, the 377-residue chain is UDP-N-acetylenolpyruvoylglucosamine reductase (377 aa).

The FAD-binding PCMH-type domain maps to 48–215 (LGGTPMAAVR…LGITLQLHTD (168 aa)). The active site involves R193. The Proton donor role is filled by S268. The active site involves E369.

It belongs to the MurB family. Requires FAD as cofactor.

Its subcellular location is the cytoplasm. The enzyme catalyses UDP-N-acetyl-alpha-D-muramate + NADP(+) = UDP-N-acetyl-3-O-(1-carboxyvinyl)-alpha-D-glucosamine + NADPH + H(+). It functions in the pathway cell wall biogenesis; peptidoglycan biosynthesis. Cell wall formation. This is UDP-N-acetylenolpyruvoylglucosamine reductase from Corynebacterium diphtheriae (strain ATCC 700971 / NCTC 13129 / Biotype gravis).